The primary structure comprises 229 residues: MDFESFTLLAATDDLGVEPAARVDADGLELRMDFADEPLAQLDAYDGDLPILVTNRPTWEGGEAADTAGRLDALETALEHDAVTAVDLELAALEGAGDHDAGRVADAARDRGASVVVSTHNFESTPDREAIVSRLERACAHGDVGKMASTAQSPDDVLAMLGATRELTAEGEQVATMCMGAAGRHSRAVAPVYGSRIGYAPVDPADATAPGQYDLATLRTLVGQLQSDA.

Residues 29–31 and Arg56 contribute to the 3-dehydroquinate site; that span reads ELR. His120 (proton donor/acceptor) is an active-site residue. Lys146 serves as the catalytic Schiff-base intermediate with substrate. 3-dehydroquinate-binding residues include Arg187, Thr208, and Gln212.

This sequence belongs to the type-I 3-dehydroquinase family. As to quaternary structure, homodimer.

It carries out the reaction 3-dehydroquinate = 3-dehydroshikimate + H2O. It participates in metabolic intermediate biosynthesis; chorismate biosynthesis; chorismate from D-erythrose 4-phosphate and phosphoenolpyruvate: step 3/7. Involved in the third step of the chorismate pathway, which leads to the biosynthesis of aromatic amino acids. Catalyzes the cis-dehydration of 3-dehydroquinate (DHQ) and introduces the first double bond of the aromatic ring to yield 3-dehydroshikimate. This Haloarcula marismortui (strain ATCC 43049 / DSM 3752 / JCM 8966 / VKM B-1809) (Halobacterium marismortui) protein is 3-dehydroquinate dehydratase.